The following is a 1202-amino-acid chain: Ribonuclease P protein component, mitochondrial (1202 aa).

Residues 1 to 122 (MAFKSFIYSK…NNNNNQHRYY (122 aa)) constitute a mitochondrion transit peptide. The interval 109–134 (NYVNNNNNNQHRYYSTGPTLPTNQYD) is disordered. Residues 118–134 (QHRYYSTGPTLPTNQYD) show a composition bias toward polar residues.

In terms of assembly, consists of an RNA moiety (RPM1) and the protein component (RPM2). Both are necessary for full enzymatic activity.

It localises to the mitochondrion. It carries out the reaction Endonucleolytic cleavage of RNA, removing 5'-extranucleotides from tRNA precursor.. In terms of biological role, ribonuclease P generates mature tRNA molecules by cleaving their 5'-ends. The protein is Ribonuclease P protein component, mitochondrial (RPM2) of Saccharomyces cerevisiae (strain ATCC 204508 / S288c) (Baker's yeast).